The chain runs to 45 residues: Large ribosomal subunit protein bL34 (45 aa).

Over residues 1–20 (MSKRTYQPNKRKRLKTHGFR) the composition is skewed to basic residues. A disordered region spans residues 1 to 45 (MSKRTYQPNKRKRLKTHGFRSRMSTASGRRIISCRRRKNRETLTA).

The protein belongs to the bacterial ribosomal protein bL34 family.

In Tropheryma whipplei (strain Twist) (Whipple's bacillus), this protein is Large ribosomal subunit protein bL34.